The sequence spans 418 residues: Nickel and cobalt resistance protein CnrC (418 aa).

A signal peptide spans 1–29 (MKQVISSFLCRPRFVGSAIWLLPVALSHA).

This sequence belongs to the outer membrane factor (OMF) (TC 1.B.17) family.

The products of the genes cnrA, cnrB, and cnrC are likely to form a membrane-bound protein complex catalyzing an energy-dependent efflux of Ni(2+) and Co(2+). The mechanism of action of the CnrCBA complex may be that of a proton/cation antiporter. This Cupriavidus metallidurans (strain ATCC 43123 / DSM 2839 / NBRC 102507 / CH34) (Ralstonia metallidurans) protein is Nickel and cobalt resistance protein CnrC (cnrC).